Reading from the N-terminus, the 314-residue chain is Small ribosomal subunit protein RACK1 (314 aa).

Phosphothreonine is present on Thr-10. The stretch at 13-44 is one WD 1 repeat; that stretch reads GHSGWVTSLSTAPENPDILLSGSRDKSIILWN. A Phosphoserine modification is found at Ser-39. Tyr-52 carries the phosphotyrosine modification. WD repeat units follow at residues 61–91, 103–133, 146–178, 190–220, 231–260, and 281–311; these read GHSHFVSDCALSFDSHYALSASWDKTIRLWD, GHTSDVLSVSISPDNRQVVSGSRDKTIKIWN, GHSDWVSCVRFSPNPDNLTFVSAGWDKAVKVWD, GHTGYVSAVTISPDGSLCASGGRDGTLMLWD, EAKANINALVFSPNRYWLCAATGSSIRIFD, and SSEPECISLTWSPDGQTLFSGWTDNLIRVWQ. Ser-148 is modified (phosphoserine). 2 positions are modified to phosphoserine: Ser-242 and Ser-255.

This sequence belongs to the WD repeat G protein beta family. Ribosomal protein RACK1 subfamily. In terms of assembly, component of the small ribosomal subunit (SSU). Mature yeast ribosomes consist of a small (40S) and a large (60S) subunit. The 40S small subunit contains 1 molecule of ribosomal RNA (18S rRNA) and at least 33 different proteins. The large 60S subunit contains 3 rRNA molecules (25S, 5.8S and 5S rRNA) and at least 46 different proteins. RACK1 is located at the head of the SSU in the vicinity of the mRNA exit channel. RACK1 interacts with the mRNA-binding protein SCP16. RACK1 also exists simultaneously as a homodimer in a cytosolic non-ribosome-bound form. Interacts with pck2. Interacts with pat1/ran1.

The protein localises to the cytoplasm. It is found in the membrane. Functionally, component of the ribosome, a large ribonucleoprotein complex responsible for the synthesis of proteins in the cell. The small ribosomal subunit (SSU) binds messenger RNAs (mRNAs) and translates the encoded message by selecting cognate aminoacyl-transfer RNA (tRNA) molecules. The large subunit (LSU) contains the ribosomal catalytic site termed the peptidyl transferase center (PTC), which catalyzes the formation of peptide bonds, thereby polymerizing the amino acids delivered by tRNAs into a polypeptide chain. The nascent polypeptides leave the ribosome through a tunnel in the LSU and interact with protein factors that function in enzymatic processing, targeting, and the membrane insertion of nascent chains at the exit of the ribosomal tunnel. Located at the head of the 40S ribosomal subunit in the vicinity of the mRNA exit channel, RACK1 serves as a scaffold protein that can recruit other proteins to the ribosome. Involved in induction of the ribosome quality control (RQC) pathway; a pathway that degrades nascent peptide chains during problematic translation. Involved in the negative regulation of translation of a specific subset of proteins. May be a receptor for protein kinase C in the regulation of actin cytoskeleton organization during cell wall synthesis and morphogenesis. Involved in the control of G2/M transition. May function as an anchoring protein for pat1/ran1 kinase. Negatively regulates the cell integrity transduction pathway by favoring translation of the tyrosine-phosphatases pyp1 and pyp2 that deactivate pmk1. Positively regulates the synthesis of the stress-responsive transcription factor Atf1 and the cytoplasmic catalase, a detoxificant enzyme induced by treatment with hydrogen peroxide. This is Small ribosomal subunit protein RACK1 from Schizosaccharomyces pombe (strain 972 / ATCC 24843) (Fission yeast).